Consider the following 876-residue polypeptide: Extended synaptotagmin-2-B (876 aa).

The tract at residues methionine 1–proline 21 is disordered. Over methionine 1 to glycine 35 the chain is Cytoplasmic. Residues methionine 36–phenylalanine 56 traverse the membrane as a helical segment. Residues proline 57 to tyrosine 59 are Lumenal-facing. A helical transmembrane segment spans residues valine 60–tryptophan 80. The Cytoplasmic portion of the chain corresponds to tryptophan 81–serine 876. The SMP-LTD domain occupies aspartate 123–valine 302. 2 consecutive C2 domains span residues leucine 301–phenylalanine 421 and asparagine 446–asparagine 592. Residues lysine 332, aspartate 333, aspartate 345, aspartate 392, glutamate 393, aspartate 394, aspartate 396, aspartate 398, and aspartate 399 each coordinate Ca(2+). Residues valine 614–aspartate 714 form a disordered region. Pro residues predominate over residues proline 636–proline 656. Positions serine 686 to serine 698 are enriched in low complexity. The C2 3 domain occupies proline 741–phenylalanine 863. Positions lysine 788 to lysine 795 are required for phosphatidylinositol 4,5-bisphosphate-dependent location at the cell membrane.

This sequence belongs to the extended synaptotagmin family. In terms of assembly, interacts with fgfr1 that has been activated by fgf1 binding. Interacts (via C2 domains) with the AP-2 complex (via an alpha subunit). Identified in a complex with the AP-2 complex and fgfr1.

Its subcellular location is the cell membrane. It localises to the endoplasmic reticulum membrane. Its function is as follows. Tethers the endoplasmic reticulum to the cell membrane and promotes the formation of appositions between the endoplasmic reticulum and the cell membrane. Binds glycerophospholipids in a barrel-like domain and may play a role in cellular lipid transport. Plays a role in the rapid internalization of fgfr1 that has been activated by fgf1 binding; this occurs most likely via the AP-2 complex. Required for normal fgf signaling and the activation of downstream signaling cascades via its role in the internalization of activated fgfr1. Required for normal embryonic development via its role in fgf signaling and the downstream regulation of t/xBRA expression. The chain is Extended synaptotagmin-2-B (esyt2-b) from Xenopus laevis (African clawed frog).